A 266-amino-acid polypeptide reads, in one-letter code: MKMKLYRAYAKVNIFLKIQGSRGNYHEIVSRFMRVPSLYDELSFVPKESSEEFELIGSFSCKREQNTIYKAYRALLEFLDEASGLHVENLMQKYAVKVTKNIPTFAGLGGGSSDAATFLKMCNEVLHLGLSQNELALIGLHVGADVPFFIYGYNSANVSGIGEVVEEFKEELLDIEVFTPQLEISTPKVYNLYRENFYNPVDGFEVERLKKISSKDALSAMSAAEANDLFAPAIQLYKELKNHYKYGYYFSGSGSSFFRVKEKENI.

The active site involves Lys-11. 103 to 113 is an ATP binding site; that stretch reads PTFAGLGGGSS. Asp-145 is an active-site residue.

This sequence belongs to the GHMP kinase family. IspE subfamily.

The catalysed reaction is 4-CDP-2-C-methyl-D-erythritol + ATP = 4-CDP-2-C-methyl-D-erythritol 2-phosphate + ADP + H(+). The protein operates within isoprenoid biosynthesis; isopentenyl diphosphate biosynthesis via DXP pathway; isopentenyl diphosphate from 1-deoxy-D-xylulose 5-phosphate: step 3/6. In terms of biological role, catalyzes the phosphorylation of the position 2 hydroxy group of 4-diphosphocytidyl-2C-methyl-D-erythritol. The polypeptide is 4-diphosphocytidyl-2-C-methyl-D-erythritol kinase (Sulfurimonas denitrificans (strain ATCC 33889 / DSM 1251) (Thiomicrospira denitrificans (strain ATCC 33889 / DSM 1251))).